Here is a 309-residue protein sequence, read N- to C-terminus: MQACTLIARAKINLYLEILGSRPDGYSEVAMILQSITLADRVHLQRRPHGILLICDHPEVPADARNLAYRAAELLQRECRAELGVEIQLEKQIPVAAGLAGGSADAAAVLVGLNQLWGLGLTVGELQSLAARLGSDIPFCVQGGTQLATGRGEVLQPLADWEGIPLLLAKPRHLGVSTAWAYQAFRAHRAASLPSAGASLPTLPQVLAALERRDLLALARSLRNDLEQPVLAEHAIVGKLRQALLEAGALGSLMSGSGPTVFGIMASLERAAQARDSLCHHFPEVDFWVTQFAPTGILLEPDPQALRLP.

Lysine 11 is a catalytic residue. Position 94–104 (94–104 (PVAAGLAGGSA)) interacts with ATP. The active site involves aspartate 136.

Belongs to the GHMP kinase family. IspE subfamily.

It catalyses the reaction 4-CDP-2-C-methyl-D-erythritol + ATP = 4-CDP-2-C-methyl-D-erythritol 2-phosphate + ADP + H(+). It functions in the pathway isoprenoid biosynthesis; isopentenyl diphosphate biosynthesis via DXP pathway; isopentenyl diphosphate from 1-deoxy-D-xylulose 5-phosphate: step 3/6. In terms of biological role, catalyzes the phosphorylation of the position 2 hydroxy group of 4-diphosphocytidyl-2C-methyl-D-erythritol. The chain is 4-diphosphocytidyl-2-C-methyl-D-erythritol kinase from Synechococcus sp. (strain JA-3-3Ab) (Cyanobacteria bacterium Yellowstone A-Prime).